We begin with the raw amino-acid sequence, 769 residues long: 3-O-beta-D-glucopyranosyl-beta-D-glucuronide phosphorylase (769 aa).

Catalysis depends on Asp-457, which acts as the Proton donor.

Belongs to the glycosyl hydrolase 94 family. In terms of assembly, homodimer.

The protein resides in the cytoplasm. The enzyme catalyses 3-O-beta-D-glucosyl-D-glucuronate + phosphate = aldehydo-D-glucuronate + alpha-D-glucose 1-phosphate. The catalysed reaction is a 3-O-beta-D-glucosyl-beta-D-glucuronoside + phosphate = a beta-D-glucuronoside + alpha-D-glucose 1-phosphate. Functionally, glycoside phosphorylase that catalyzes the reversible phosphorolysis of 3-O-beta-D-glucosyl-D-glucuronate into D-glucuronic acid and alpha-D-glucose 1-phosphate. Cannot phosphorolyze cellobionic acid and laminaribiose. In the reverse direction, using alpha-D-glucose 1-phosphate as a donor substrate, the enzyme acts on D-glucuronate and its artificial derivative p-nitrophenyl-beta-D-glucuronide. The apparent catalytic efficiency towards p-nitrophenyl-beta-D-glucuronide is approximately 5-fold higher than that towards D-glucuronic acid. Is probably involved in the metabolism of oligosaccharides containing the 3-O-beta-D-glucopyranosyl-beta-D-glucuronide structure released from bacterial and plant acidic carbohydrates. The sequence is that of 3-O-beta-D-glucopyranosyl-beta-D-glucuronide phosphorylase from Paenibacillus borealis.